Consider the following 373-residue polypeptide: Type II secretion system protein L (373 aa).

Residues 1–214 (MTAWRDTLGR…RRSDPMQRWN (214 aa)) are Cytoplasmic-facing. A helical membrane pass occupies residues 215 to 233 (LLLAVAALVLLAVAGWLLL). The Periplasmic segment spans residues 234-373 (DNRRQAADDL…AKEAADAAQR (140 aa)).

Belongs to the GSP L family. In terms of assembly, type II secretion system is composed of four main components: the outer membrane complex, the inner membrane complex, the cytoplasmic secretion ATPase and the periplasm-spanning pseudopilus. Forms homodimers. Interacts with XpsM/GspM. Interacts with XpsE/GspE and XpsF/GspF.

It localises to the cell inner membrane. Functionally, inner membrane component of the type II secretion system required for the energy-dependent secretion of extracellular factors such as proteases and toxins from the periplasm. Plays a role in the complex assembly and recruits XpsM resulting in a stable complex in the inner membrane. Provides thus a link between the energy-providing XpsE protein in the cytoplasm and the rest of the T2SS machinery. This is Type II secretion system protein L (pefL) from Xanthomonas campestris pv. campestris (strain ATCC 33913 / DSM 3586 / NCPPB 528 / LMG 568 / P 25).